Consider the following 234-residue polypeptide: Sugar fermentation stimulation protein homolog (234 aa).

The protein belongs to the SfsA family.

The sequence is that of Sugar fermentation stimulation protein homolog from Pectobacterium atrosepticum (strain SCRI 1043 / ATCC BAA-672) (Erwinia carotovora subsp. atroseptica).